The sequence spans 460 residues: MLO-like protein 9 (460 aa).

The Extracellular segment spans residues 1–21 (MAGGGGGGGGEGPRQLDQTPT). Residues 22–42 (WAVSTVCGVIILISIILELII) form a helical membrane-spanning segment. The Cytoplasmic portion of the chain corresponds to 43–67 (HKVGEVFERKKKKALFEALEKIKNE). The chain crosses the membrane as a helical span at residues 68 to 88 (LMVLGFISLLLTFGQNYIASI). Residues 89 to 158 (CVPSRYGHAM…ISLNALHQVH (70 aa)) are Extracellular-facing. The helical transmembrane segment at 159–179 (IFIFFLAVFHVIYSAITMMLG) threads the bilayer. Topologically, residues 180-289 (RAKIRGWKVW…KVVVGIRPEL (110 aa)) are cytoplasmic. The helical transmembrane segment at 290–310 (WAFVMLFLLFDVHGWYVTAVI) threads the bilayer. Over 311–315 (TMIPP) the chain is Extracellular. A helical transmembrane segment spans residues 316 to 336 (LLTLAIGTKLQAIISYMALEI). The Cytoplasmic segment spans residues 337 to 366 (QERHAVIQGMPVVNVSDQHFWFEKPDLVLH). A helical membrane pass occupies residues 367–387 (MIHFVLFQNAFEITYFFWIWY). The Extracellular segment spans residues 388–398 (EFGLRSCFHHH). A helical transmembrane segment spans residues 399 to 419 (FGLIIIRVCLGVGVQFLCSYI). Residues 420 to 460 (TLPLYALVTQMGSTMKRSVFDEQTSKALEQWHKKARKKNEK) are Cytoplasmic-facing. The calmodulin-binding stretch occupies residues 441 to 460 (EQTSKALEQWHKKARKKNEK).

Belongs to the MLO family.

The protein resides in the membrane. May be involved in modulation of pathogen defense and leaf cell death. Activity seems to be regulated by Ca(2+)-dependent calmodulin binding and seems not to require heterotrimeric G proteins. The sequence is that of MLO-like protein 9 (MLO9) from Arabidopsis thaliana (Mouse-ear cress).